The following is a 125-amino-acid chain: Lectin (125 aa).

Residues 1-120 (MDYEILFSDE…CGGARRVICE (120 aa)) form the C-type lectin domain. Disulfide bonds link Cys21-Cys119 and Cys96-Cys111.

Homodimer.

Its function is as follows. Role in the defense system of the organism against microorganisms. This calcium-binding lectin binds galactose. This chain is Lectin, found in Polyandrocarpa misakiensis (Tunicate).